A 186-amino-acid polypeptide reads, in one-letter code: MSEPASISAAIAGRYATAIFDLAQEAKGIDALSADVDALTAALAGSAELRDLISSPVYTREEQGDAIAAVAAKMGLSAPLANGLKLMATKRRLFALPQLLKGLAAAIAEAKGEMTADVTSATALSAAQAEKLAATLAKQTGKTVKLNVAVDESLIGGMIVKLGSRMIDTTVKAKLASLQNAMKEVG.

Belongs to the ATPase delta chain family. As to quaternary structure, F-type ATPases have 2 components, F(1) - the catalytic core - and F(0) - the membrane proton channel. F(1) has five subunits: alpha(3), beta(3), gamma(1), delta(1), epsilon(1). F(0) has three main subunits: a(1), b(2) and c(10-14). The alpha and beta chains form an alternating ring which encloses part of the gamma chain. F(1) is attached to F(0) by a central stalk formed by the gamma and epsilon chains, while a peripheral stalk is formed by the delta and b chains.

It localises to the cellular chromatophore membrane. F(1)F(0) ATP synthase produces ATP from ADP in the presence of a proton or sodium gradient. F-type ATPases consist of two structural domains, F(1) containing the extramembraneous catalytic core and F(0) containing the membrane proton channel, linked together by a central stalk and a peripheral stalk. During catalysis, ATP synthesis in the catalytic domain of F(1) is coupled via a rotary mechanism of the central stalk subunits to proton translocation. In terms of biological role, this protein is part of the stalk that links CF(0) to CF(1). It either transmits conformational changes from CF(0) to CF(1) or is implicated in proton conduction. The polypeptide is ATP synthase subunit delta (Rhodobacter capsulatus (Rhodopseudomonas capsulata)).